We begin with the raw amino-acid sequence, 160 residues long: Cytochrome b6-f complex subunit 4 (160 aa).

Transmembrane regions (helical) follow at residues Leu36 to Val56, Leu95 to Glu115, and Ser131 to Ile151.

The protein belongs to the cytochrome b family. PetD subfamily. The 4 large subunits of the cytochrome b6-f complex are cytochrome b6, subunit IV (17 kDa polypeptide, PetD), cytochrome f and the Rieske protein, while the 4 small subunits are PetG, PetL, PetM and PetN. The complex functions as a dimer.

Its subcellular location is the cellular thylakoid membrane. Component of the cytochrome b6-f complex, which mediates electron transfer between photosystem II (PSII) and photosystem I (PSI), cyclic electron flow around PSI, and state transitions. In Prochlorococcus marinus (strain NATL2A), this protein is Cytochrome b6-f complex subunit 4.